The primary structure comprises 693 residues: Lamina-associated polypeptide 2, isoforms alpha/zeta (693 aa).

One can recognise an LEM-like domain in the interval 5–48 (LEDPSVLTKDKLKSELVANNVTLPAGEQRKDVYVQLYLQHLTAR). Disordered regions lie at residues 48–113 (RNRP…DVTE), 148–211 (LREQ…LAST), and 227–270 (TRPP…KLAP). The interval 49 to 107 (NRPPLAAGANSKGPPDFSSDEEREPTPVLGSGASVGRGRGAVGRKATKKTDKPRLEDKD) is linker. Residues Ser-59, Ser-66, and Ser-67 each carry the phosphoserine modification. At Thr-74 the chain carries Phosphothreonine. Phosphoserine occurs at positions 79 and 82. Omega-N-methylarginine occurs at positions 85 and 87. Basic and acidic residues predominate over residues 96 to 105 (KKTDKPRLED). The LEM domain occupies 108–152 (DLDVTELSNEELLDQLVRYGVNPGPIVGTTRKLYEKKLLKLREQG). Phosphothreonine is present on Thr-153. The segment covering 154–177 (ESRSSTPLPTVSSSAENTRQNGSN) has biased composition (polar residues). Ser-155 and Ser-158 each carry phosphoserine. Residues Thr-159 and Thr-163 each carry the phosphothreonine modification. 2 positions are modified to phosphoserine: Ser-165 and Ser-167. Positions 178 to 190 (DSDRYSDNDEGKK) are enriched in basic and acidic residues. The Nuclear localization signal motif lies at 190 to 196 (KKEHKKV). Ser-206 is modified (N6-acetyllysine). The span at 245–254 (TKRDPPRETC) shows a compositional bias: basic and acidic residues. Position 310 is a phosphoserine (Ser-310). Residue Arg-329 is modified to Omega-N-methylarginine. Residues 332–351 (KSRAQPLRAEEPGVSDQSVF) are disordered. Residues Ser-349, Ser-352, Ser-368, Ser-420, and Ser-422 each carry the phosphoserine modification. Positions 412 to 422 (QSSYQDSESLS) are enriched in low complexity. The disordered stretch occupies residues 412–442 (QSSYQDSESLSPPRKVPRLSEKPARGGDSGS). The stretch at 557–656 (TESCDKHLDL…MGRRYLWLKD (100 aa)) forms a coiled coil. Lys-655 carries the N6-acetyllysine modification.

This sequence belongs to the LEM family. As to quaternary structure, homooligomer. Interacts with LMNA, BANF1 and RB1 and with chromosomes. Associates directly or indirectly with lamins at specific cell-cycle stages. Interacts with CMTM6. Phosphorylated in a mitose-specific manner.

Its subcellular location is the nucleus. It is found in the chromosome. Its function is as follows. May be involved in the structural organization of the nucleus and in the post-mitotic nuclear assembly. Plays an important role, together with LMNA, in the nuclear anchorage of RB1. This is Lamina-associated polypeptide 2, isoforms alpha/zeta (Tmpo) from Mus musculus (Mouse).